Reading from the N-terminus, the 102-residue chain is U7-agatoxin-Ao1a (102 aa).

Positions 1-19 are cleaved as a signal peptide; the sequence is MTQAFFFLLLVSLVASTLS. Positions 20–39 are excised as a propeptide; it reads KEFNFCPRAIDEVCPVKEKR. Tryptophan 101 bears the Tryptophan amide mark.

It belongs to the venom protein 11 family. 02 (wap-2) subfamily. Post-translationally, contains 5 disulfide bonds. Expressed by the venom gland.

The protein resides in the secreted. This is U7-agatoxin-Ao1a from Agelena orientalis (Funnel-web spider).